Here is a 418-residue protein sequence, read N- to C-terminus: UDP-glucuronic acid decarboxylase 1 (418 aa).

Over 1–17 (MMRMSWMVTVINRRMMK) the chain is Cytoplasmic. The helical; Signal-anchor for type II membrane protein transmembrane segment at 18–38 (ILIALALIAYIASVWGTYANM) threads the bilayer. The Lumenal portion of the chain corresponds to 39 to 418 (RSIQEHGEMK…RMKKGRPRHN (380 aa)). Gly-96, Phe-97, Val-98, Asp-117, Asn-118, Phe-120, Thr-121, Gly-122, Asp-142, and Val-143 together coordinate NAD(+). Leu-147 and Tyr-148 together coordinate UDP-alpha-D-glucuronate. NAD(+)-binding residues include Leu-157 and Ser-159. Lys-175 provides a ligand contact to UDP-alpha-D-glucuronate. Thr-176 serves as a coordination point for NAD(+). 4 residues coordinate UDP-alpha-D-glucuronate: Asn-183, Gly-186, Lys-189, and Arg-190. NAD(+) is bound by residues Ala-198, Tyr-229, and Lys-233. Tyr-229 (proton acceptor) is an active-site residue. Residues Tyr-243, Gln-246, and Glu-247 each coordinate UDP-alpha-D-glucuronate. Thr-259, His-265, and Arg-270 together coordinate NAD(+). N-linked (GlcNAc...) asparagine glycans are attached at residues Asn-314 and Asn-383. Residues 397–418 (ANNQYIPKPKAARMKKGRPRHN) form a disordered region. A compositionally biased stretch (basic residues) spans 406 to 418 (KAARMKKGRPRHN).

The protein belongs to the NAD(P)-dependent epimerase/dehydratase family. UDP-glucuronic acid decarboxylase subfamily. In terms of assembly, homodimer and homotetramer. Requires NAD(+) as cofactor.

It localises to the golgi apparatus. Its subcellular location is the golgi stack membrane. It catalyses the reaction UDP-alpha-D-glucuronate + H(+) = UDP-alpha-D-xylose + CO2. It participates in nucleotide-sugar biosynthesis; UDP-alpha-D-xylose biosynthesis; UDP-alpha-D-xylose from UDP-alpha-D-glucuronate: step 1/1. Its function is as follows. Catalyzes the NAD-dependent decarboxylation of UDP-glucuronic acid to UDP-xylose. Necessary for the biosynthesis of the core tetrasaccharide in glycosaminoglycan biosynthesis. Essential during embryogenesis for craniofacial development. The polypeptide is UDP-glucuronic acid decarboxylase 1 (Danio rerio (Zebrafish)).